A 338-amino-acid polypeptide reads, in one-letter code: Secretory carrier-associated membrane protein 1 (338 aa).

A disordered region spans residues 1 to 64; it reads MSDFDSNPFA…NVPNTQPAIM (64 aa). Serine 2 carries the N-acetylserine modification. Serine 2 carries the post-translational modification Phosphoserine. The Cytoplasmic segment spans residues 2–155; that stretch reads SDFDSNPFAD…QKTVKLMYYL (154 aa). Position 45 is a phosphothreonine (threonine 45). A helical transmembrane segment spans residues 156–176; that stretch reads WMFHAVTLFLNIFGCLAWFCV. The Lumenal segment spans residues 177 to 181; that stretch reads DSSRA. A helical membrane pass occupies residues 182–202; the sequence is VDFGLSILWFLLFTPCSFVCW. The Cytoplasmic segment spans residues 203–218; that stretch reads YRPLYGAFRSDSSFRF. A helical membrane pass occupies residues 219–239; it reads FVFFFVYICQFAVHVLQAAGF. Residues 240–261 lie on the Lumenal side of the membrane; the sequence is HNWGNCGWISSLTGLNKNIPVG. The chain crosses the membrane as a helical span at residues 262–282; the sequence is IMMIIIAALFTASAVISLVMF. The Cytoplasmic segment spans residues 283–338; the sequence is KKVHGLYRTTGASFEKAQQEFATGVMSNKTVQTAAANAASTAATSAAQNAFKGNQM.

Belongs to the SCAMP family. Interacts with SYNRG, ITSN1 and SLC9A7.

Its subcellular location is the golgi apparatus. The protein localises to the trans-Golgi network membrane. The protein resides in the recycling endosome membrane. Its function is as follows. Functions in post-Golgi recycling pathways. Acts as a recycling carrier to the cell surface. The chain is Secretory carrier-associated membrane protein 1 (Scamp1) from Mus musculus (Mouse).